Reading from the N-terminus, the 65-residue chain is Large ribosomal subunit protein bL35 (65 aa).

Over residues methionine 1–alanine 10 the composition is skewed to basic and acidic residues. The disordered stretch occupies residues methionine 1 to cysteine 24.

It belongs to the bacterial ribosomal protein bL35 family.

This Tolumonas auensis (strain DSM 9187 / NBRC 110442 / TA 4) protein is Large ribosomal subunit protein bL35.